The sequence spans 131 residues: Small ribosomal subunit protein eS24 (131 aa).

Met-1 is modified (N-acetylmethionine). The residue at position 9 (Thr-9) is a Phosphothreonine. Lys-37 is covalently cross-linked (Glycyl lysine isopeptide (Lys-Gly) (interchain with G-Cter in SUMO2)). Residues 90 to 100 show a composition bias toward basic and acidic residues; sequence RLARHGLYEKK. The disordered stretch occupies residues 90-131; it reads RLARHGLYEKKKTSRKQRKERKNRMKKVRGTAKANVGAGKKK. Residues 101–119 show a composition bias toward basic residues; the sequence is KTSRKQRKERKNRMKKVRG.

The protein belongs to the eukaryotic ribosomal protein eS24 family. In terms of assembly, component of the small ribosomal subunit. Part of the small subunit (SSU) processome, composed of more than 70 proteins and the RNA chaperone small nucleolar RNA (snoRNA) U3.

The protein localises to the cytoplasm. Its subcellular location is the nucleus. It is found in the nucleolus. Component of the small ribosomal subunit. The ribosome is a large ribonucleoprotein complex responsible for the synthesis of proteins in the cell. Required for processing of pre-rRNA and maturation of 40S ribosomal subunits. Part of the small subunit (SSU) processome, first precursor of the small eukaryotic ribosomal subunit. During the assembly of the SSU processome in the nucleolus, many ribosome biogenesis factors, an RNA chaperone and ribosomal proteins associate with the nascent pre-rRNA and work in concert to generate RNA folding, modifications, rearrangements and cleavage as well as targeted degradation of pre-ribosomal RNA by the RNA exosome. This chain is Small ribosomal subunit protein eS24 (RPS24), found in Macaca fascicularis (Crab-eating macaque).